We begin with the raw amino-acid sequence, 235 residues long: Probable ribosomal RNA small subunit methyltransferase A (235 aa).

Positions 9, 11, 34, 55, 78, and 93 each coordinate S-adenosyl-L-methionine.

This sequence belongs to the class I-like SAM-binding methyltransferase superfamily. rRNA adenine N(6)-methyltransferase family. RsmA subfamily.

The protein resides in the cytoplasm. In terms of biological role, specifically dimethylates two adjacent adenosines in the loop of a conserved hairpin near the 3'-end of 16S rRNA in the 30S particle. May play a critical role in biogenesis of 30S subunits. This is Probable ribosomal RNA small subunit methyltransferase A from Pyrobaculum islandicum (strain DSM 4184 / JCM 9189 / GEO3).